Consider the following 506-residue polypeptide: Methylthioalkylmalate synthase 2, chloroplastic (506 aa).

Residues 1 to 49 (MASSLLTSSGMIPTTGSTVVGRSVLPFQSSLHSLRLTHSYKNPALFISC) constitute a chloroplast transit peptide. Residues 85–359 (VRVFDTTLRD…YTRIDTRQIM (275 aa)) enclose the Pyruvate carboxyltransferase domain.

It belongs to the alpha-IPM synthase/homocitrate synthase family.

The protein resides in the plastid. It localises to the chloroplast. It catalyses the reaction an omega-(methylsulfanyl)-2-oxoalkanoate + acetyl-CoA + H2O = a 2-(omega-methylsulfanyl)alkylmalate + CoA + H(+). Catalyzes only the first methionine chain elongation cycle. The protein is Methylthioalkylmalate synthase 2, chloroplastic (MAM2) of Arabidopsis thaliana (Mouse-ear cress).